We begin with the raw amino-acid sequence, 269 residues long: Tryptophan synthase alpha chain (269 aa).

Residues Glu-49 and Asp-60 each act as proton acceptor in the active site.

The protein belongs to the TrpA family. In terms of assembly, tetramer of two alpha and two beta chains.

The catalysed reaction is (1S,2R)-1-C-(indol-3-yl)glycerol 3-phosphate + L-serine = D-glyceraldehyde 3-phosphate + L-tryptophan + H2O. The protein operates within amino-acid biosynthesis; L-tryptophan biosynthesis; L-tryptophan from chorismate: step 5/5. In terms of biological role, the alpha subunit is responsible for the aldol cleavage of indoleglycerol phosphate to indole and glyceraldehyde 3-phosphate. This is Tryptophan synthase alpha chain from Actinobacillus pleuropneumoniae serotype 5b (strain L20).